A 273-amino-acid polypeptide reads, in one-letter code: DNA repair protein RecO (273 aa).

The protein belongs to the RecO family.

Functionally, involved in DNA repair and RecF pathway recombination. The polypeptide is DNA repair protein RecO (Mycolicibacterium gilvum (strain PYR-GCK) (Mycobacterium gilvum (strain PYR-GCK))).